The chain runs to 146 residues: Vascular endothelial growth factor isoform GtVF (146 aa).

The first 24 residues, 1–24 (MAAYLLAVAILFCIQGWPSGTVQG), serve as a signal peptide directing secretion. Position 25 is a pyrrolidone carboxylic acid (Gln25). 3 disulfides stabilise this stretch: Cys38-Cys80, Cys69-Cys115, and Cys73-Cys117. The tract at residues 116–146 (ECRPRSRSGVDSGKRKRNPEEGEPRAKFPFV) is disordered. Basic and acidic residues predominate over residues 133 to 146 (NPEEGEPRAKFPFV).

The protein belongs to the PDGF/VEGF growth factor family. Snake venom VEGF subfamily. As to quaternary structure, homodimer; disulfide-linked. As to expression, expressed by the venom gland.

Its subcellular location is the secreted. Functionally, snake venom VEGFs that may contribute to venom dispersion and prey subjugation by inducing vascular permeability and hypotension. This protein induces an increase in capillary permeability after intradermal injection, in a VEGFR-2 (KDR) dependent manner. In addition, it provokes a drastic hypotensive effect after intravenous injection. The hypotension is mediated by nitric oxide (NO), which is produced by VEGF-activated endothelium NO synthase. Also induces angiogenesis in vitro. Unlike other crotalid VEGFs, this protein probably interacts with VEGF receptor-2 (KDR). This chain is Vascular endothelial growth factor isoform GtVF, found in Gloydius tsushimaensis (Tsushima Island pitviper).